The sequence spans 250 residues: DNA repair protein RecO (250 aa).

Belongs to the RecO family.

In terms of biological role, involved in DNA repair and RecF pathway recombination. In Staphylococcus aureus (strain MRSA252), this protein is DNA repair protein RecO.